A 460-amino-acid chain; its full sequence is ATP synthase subunit beta (460 aa).

150 to 157 (GGAGVGKT) contributes to the ATP binding site.

It belongs to the ATPase alpha/beta chains family. F-type ATPases have 2 components, CF(1) - the catalytic core - and CF(0) - the membrane proton channel. CF(1) has five subunits: alpha(3), beta(3), gamma(1), delta(1), epsilon(1). CF(0) has three main subunits: a(1), b(2) and c(9-12). The alpha and beta chains form an alternating ring which encloses part of the gamma chain. CF(1) is attached to CF(0) by a central stalk formed by the gamma and epsilon chains, while a peripheral stalk is formed by the delta and b chains.

It is found in the cell inner membrane. The enzyme catalyses ATP + H2O + 4 H(+)(in) = ADP + phosphate + 5 H(+)(out). Produces ATP from ADP in the presence of a proton gradient across the membrane. The catalytic sites are hosted primarily by the beta subunits. The protein is ATP synthase subunit beta of Escherichia coli (strain SMS-3-5 / SECEC).